Reading from the N-terminus, the 994-residue chain is Glycine dehydrogenase (decarboxylating), mitochondrial (994 aa).

The N-terminal 21 residues, 1-21 (MLKLLRNNGINKLKSNLIRNY), are a transit peptide targeting the mitochondrion. The residue at position 742 (Lys-742) is an N6-(pyridoxal phosphate)lysine.

Belongs to the GcvP family. Homodimer. The glycine cleavage system is composed of four proteins: P, T, L and H. Pyridoxal 5'-phosphate is required as a cofactor.

The protein localises to the mitochondrion. It carries out the reaction N(6)-[(R)-lipoyl]-L-lysyl-[glycine-cleavage complex H protein] + glycine + H(+) = N(6)-[(R)-S(8)-aminomethyldihydrolipoyl]-L-lysyl-[glycine-cleavage complex H protein] + CO2. The glycine cleavage system catalyzes the degradation of glycine. The P protein binds the alpha-amino group of glycine through its pyridoxal phosphate cofactor; CO(2) is released and the remaining methylamine moiety is then transferred to the lipoamide cofactor of the H protein. The polypeptide is Glycine dehydrogenase (decarboxylating), mitochondrial (gcvP) (Dictyostelium discoideum (Social amoeba)).